The primary structure comprises 358 residues: UDP-N-acetylglucosamine--N-acetylmuramyl-(pentapeptide) pyrophosphoryl-undecaprenol N-acetylglucosamine transferase (358 aa).

UDP-N-acetyl-alpha-D-glucosamine is bound by residues Ser196 and Gln287.

This sequence belongs to the glycosyltransferase 28 family. MurG subfamily.

It localises to the cell membrane. The catalysed reaction is Mur2Ac(oyl-L-Ala-gamma-D-Glu-L-Lys-D-Ala-D-Ala)-di-trans,octa-cis-undecaprenyl diphosphate + UDP-N-acetyl-alpha-D-glucosamine = beta-D-GlcNAc-(1-&gt;4)-Mur2Ac(oyl-L-Ala-gamma-D-Glu-L-Lys-D-Ala-D-Ala)-di-trans,octa-cis-undecaprenyl diphosphate + UDP + H(+). Its pathway is cell wall biogenesis; peptidoglycan biosynthesis. Functionally, cell wall formation. Catalyzes the transfer of a GlcNAc subunit on undecaprenyl-pyrophosphoryl-MurNAc-pentapeptide (lipid intermediate I) to form undecaprenyl-pyrophosphoryl-MurNAc-(pentapeptide)GlcNAc (lipid intermediate II). In Streptococcus uberis (strain ATCC BAA-854 / 0140J), this protein is UDP-N-acetylglucosamine--N-acetylmuramyl-(pentapeptide) pyrophosphoryl-undecaprenol N-acetylglucosamine transferase.